Reading from the N-terminus, the 341-residue chain is L-threonine 3-dehydrogenase (341 aa).

A Zn(2+)-binding site is contributed by Cys-38. Residues Thr-40 and His-43 each act as charge relay system in the active site. Zn(2+) is bound by residues His-63, Glu-64, Cys-93, Cys-96, Cys-99, and Cys-107. NAD(+) contacts are provided by residues Ile-175, Asp-195, Arg-200, Leu-262–Ile-264, and Ile-286–Tyr-287.

It belongs to the zinc-containing alcohol dehydrogenase family. In terms of assembly, homotetramer. It depends on Zn(2+) as a cofactor.

The protein localises to the cytoplasm. The enzyme catalyses L-threonine + NAD(+) = (2S)-2-amino-3-oxobutanoate + NADH + H(+). It participates in amino-acid degradation; L-threonine degradation via oxydo-reductase pathway; glycine from L-threonine: step 1/2. Its function is as follows. Catalyzes the NAD(+)-dependent oxidation of L-threonine to 2-amino-3-ketobutyrate. The polypeptide is L-threonine 3-dehydrogenase (Proteus mirabilis (strain HI4320)).